Here is a 162-residue protein sequence, read N- to C-terminus: Inorganic pyrophosphatase (162 aa).

Glu8 contacts Mg(2+). Substrate-binding residues include Lys16, Arg30, and Tyr42. Mg(2+)-binding residues include Asp52, Asp57, Asp84, and Asp89. The active-site Proton acceptor is the Asp89. Residue Tyr126 coordinates substrate.

It belongs to the PPase family. As to quaternary structure, homohexamer. Mg(2+) serves as cofactor.

The protein localises to the cytoplasm. It carries out the reaction diphosphate + H2O = 2 phosphate + H(+). Functionally, catalyzes the hydrolysis of inorganic pyrophosphate (PPi) forming two phosphate ions. The sequence is that of Inorganic pyrophosphatase from Mycobacterium bovis (strain ATCC BAA-935 / AF2122/97).